Here is a 189-residue protein sequence, read N- to C-terminus: Potassium-transporting ATPase KdpC subunit (189 aa).

Residues 6 to 26 (PAILLFIMFTIICGGIYPALV) form a helical membrane-spanning segment.

This sequence belongs to the KdpC family. As to quaternary structure, the system is composed of three essential subunits: KdpA, KdpB and KdpC.

It localises to the cell inner membrane. Its function is as follows. Part of the high-affinity ATP-driven potassium transport (or Kdp) system, which catalyzes the hydrolysis of ATP coupled with the electrogenic transport of potassium into the cytoplasm. This subunit acts as a catalytic chaperone that increases the ATP-binding affinity of the ATP-hydrolyzing subunit KdpB by the formation of a transient KdpB/KdpC/ATP ternary complex. In Trichlorobacter lovleyi (strain ATCC BAA-1151 / DSM 17278 / SZ) (Geobacter lovleyi), this protein is Potassium-transporting ATPase KdpC subunit.